We begin with the raw amino-acid sequence, 293 residues long: Phospholipid scramblase 2 (293 aa).

Positions 1 to 39 (MDKQNVQMNPPHPGTNLTGPPGHIGYPGPQAGYAVPPPG) are disordered. A proline-rich domain (PRD) region spans residues 1 to 66 (MDKQNVQMNP…GHPGAPTQVP (66 aa)). The Cytoplasmic portion of the chain corresponds to 1-270 (MDKQNVQMNP…IQFPLDLDVK (270 aa)). Thr143 is modified (phosphothreonine; by PKC). S-palmitoyl cysteine attachment occurs at residues Cys166, Cys167, Cys170, and Cys171. Residues 271–287 (MKAVMLGACFLIDFMFF) form a helical membrane-spanning segment. Residues 288-293 (EMTRGE) lie on the Extracellular side of the membrane.

This sequence belongs to the phospholipid scramblase family. Requires Ca(2+) as cofactor.

Its subcellular location is the membrane. It catalyses the reaction a 1,2-diacyl-sn-glycero-3-phosphocholine(in) = a 1,2-diacyl-sn-glycero-3-phosphocholine(out). Its function is as follows. May catalyze calcium-induced ATP-independent rapid bidirectional and non-specific movement of phospholipids (lipid scrambling or lipid flip-flop) between the inner and outer leaflet of the plasma membrane. The protein is Phospholipid scramblase 2 of Bos taurus (Bovine).